The primary structure comprises 249 residues: Exosome complex component Rrp41 (249 aa).

This sequence belongs to the RNase PH family. Rrp41 subfamily. Component of the archaeal exosome complex. Forms a hexameric ring-like arrangement composed of 3 Rrp41-Rrp42 heterodimers. The hexameric ring associates with a trimer of Rrp4 and/or Csl4 subunits.

The protein resides in the cytoplasm. Functionally, catalytic component of the exosome, which is a complex involved in RNA degradation. Has 3'-&gt;5' exoribonuclease activity. Can also synthesize heteromeric RNA-tails. The chain is Exosome complex component Rrp41 from Pyrococcus abyssi (strain GE5 / Orsay).